The sequence spans 329 residues: DNA-directed RNA polymerase subunit alpha (329 aa).

The tract at residues 1 to 235 (MQGSVTEFLK…EQLEAFVDLR (235 aa)) is alpha N-terminal domain (alpha-NTD). Residues 249 to 329 (FDPILLRPVD…DWPPASIADE (81 aa)) are alpha C-terminal domain (alpha-CTD).

This sequence belongs to the RNA polymerase alpha chain family. In terms of assembly, homodimer. The RNAP catalytic core consists of 2 alpha, 1 beta, 1 beta' and 1 omega subunit. When a sigma factor is associated with the core the holoenzyme is formed, which can initiate transcription.

It carries out the reaction RNA(n) + a ribonucleoside 5'-triphosphate = RNA(n+1) + diphosphate. DNA-dependent RNA polymerase catalyzes the transcription of DNA into RNA using the four ribonucleoside triphosphates as substrates. This chain is DNA-directed RNA polymerase subunit alpha, found in Salmonella choleraesuis (strain SC-B67).